A 195-amino-acid polypeptide reads, in one-letter code: MTLTHHSTFIKGIEGSAEGEIEDVRQTTVFDPPFYGHPMLVPPSPSLTTMFRTRSTTPDEEGTAIAEIDQQDWDIMVKVPTYEYYGFVMYLVSMLGFGVYIVWALTPAPVLKFFEIHYYLSRWWALAIPTWLFVLVIYIHVVLNAYNTEVLTKPFSSLECIVDQYALVGEEDGAAHGRVVDLRLCDVNKQQLEET.

Residues 1-84 (MTLTHHSTFI…IMVKVPTYEY (84 aa)) are Cytoplasmic-facing. The chain crosses the membrane as a helical span at residues 85 to 105 (YGFVMYLVSMLGFGVYIVWAL). Residues 106-122 (TPAPVLKFFEIHYYLSR) are Lumenal-facing. A helical membrane pass occupies residues 123–143 (WWALAIPTWLFVLVIYIHVVL). Residues 144–195 (NAYNTEVLTKPFSSLECIVDQYALVGEEDGAAHGRVVDLRLCDVNKQQLEET) lie on the Cytoplasmic side of the membrane.

It localises to the endoplasmic reticulum membrane. Functionally, has a role in meiosis. The protein is Meiotically up-regulated gene 84 protein (mug84) of Schizosaccharomyces pombe (strain 972 / ATCC 24843) (Fission yeast).